We begin with the raw amino-acid sequence, 396 residues long: Tryptophan synthase beta chain (396 aa).

N6-(pyridoxal phosphate)lysine is present on K86.

It belongs to the TrpB family. In terms of assembly, tetramer of two alpha and two beta chains. The cofactor is pyridoxal 5'-phosphate.

It carries out the reaction (1S,2R)-1-C-(indol-3-yl)glycerol 3-phosphate + L-serine = D-glyceraldehyde 3-phosphate + L-tryptophan + H2O. Its pathway is amino-acid biosynthesis; L-tryptophan biosynthesis; L-tryptophan from chorismate: step 5/5. Functionally, the beta subunit is responsible for the synthesis of L-tryptophan from indole and L-serine. The chain is Tryptophan synthase beta chain from Francisella tularensis subsp. holarctica (strain FTNF002-00 / FTA).